Consider the following 75-residue polypeptide: Probable protein BRICK1-B (75 aa).

Residues 41-72 (MSCRSRLATLNEKLTTLERRIEYIEARVTKGE) adopt a coiled-coil conformation.

Belongs to the BRK1 family.

The protein resides in the cytoplasm. The protein localises to the cytoskeleton. Involved in regulation of actin and microtubule organization. Part of a WAVE complex that activates the Arp2/3 complex. This Xenopus laevis (African clawed frog) protein is Probable protein BRICK1-B (brk1-b).